The chain runs to 604 residues: Putative sodium-dependent multivitamin transporter (604 aa).

The next 6 helical transmembrane spans lie at L4–I24, V48–V68, M78–I98, V134–L154, I160–L180, and L188–L208. N-linked (GlcNAc...) asparagine glycosylation is found at N222 and N225. 7 consecutive transmembrane segments (helical) span residues H234 to N254, A273 to L293, L331 to I351, L389 to L409, L413 to V433, G440 to P460, and A511 to L531.

This sequence belongs to the sodium:solute symporter (SSF) (TC 2.A.21) family.

It localises to the cell membrane. The sequence is that of Putative sodium-dependent multivitamin transporter from Drosophila melanogaster (Fruit fly).